Consider the following 380-residue polypeptide: E3 ubiquitin-protein ligase Iruka (380 aa).

A disordered region spans residues 50–92 (APEMDSSTAGASGSARSGSSGSGSSGSHDTLSRGSSSSGSQVN). Composition is skewed to low complexity over residues 55 to 68 (SSTA…RSGS) and 74 to 89 (SGSH…SSGS). The RING-type; atypical zinc finger occupies 253–294 (CSICWDDFKIDETVRKLPCSHLYHENCIVPWLNLHSTCPICR). A disordered region spans residues 317–367 (EMAADGSNSERRSASTATGTDNPSPANNPSQAAAEGGRTRPDANPAQAARN). Residues 338 to 350 (NPSPANNPSQAAA) are compositionally biased toward low complexity.

Interacts (via N-terminus) with CG7546 (via Ubl domain).

It catalyses the reaction S-ubiquitinyl-[E2 ubiquitin-conjugating enzyme]-L-cysteine + [acceptor protein]-L-lysine = [E2 ubiquitin-conjugating enzyme]-L-cysteine + N(6)-ubiquitinyl-[acceptor protein]-L-lysine.. The protein operates within protein modification; protein ubiquitination. Its function is as follows. E3 ubiquitin-protein ligase that mediates E2-dependent, 'Lys-48'- and/or 'Lys-63'-linked polyubiquitination of substrates. Recognizes miRNA-empty Ago1 and triggers its degradation via polyubiquitination independently of the Bag6 complex. By targeting miRNA-empty Ago1, eliminates dysfunctional Ago1 not able to bind miRNA and thereby plays a role in the quality control of miRNA-mediated silencing. The polypeptide is E3 ubiquitin-protein ligase Iruka (Drosophila melanogaster (Fruit fly)).